The primary structure comprises 314 residues: Olfactory receptor 5P62 (314 aa).

The Extracellular segment spans residues 1-28 (MAFIYNGSQTTVTEFILLGLTDDPVLKV). N6 is a glycosylation site (N-linked (GlcNAc...) asparagine). Residues 29–49 (ILFCIILCIYLVTVFGNLSTI) traverse the membrane as a helical segment. The Cytoplasmic segment spans residues 50 to 57 (LLIGVSSK). A helical membrane pass occupies residues 58-78 (LHHPMYFFLSHLASVDMGLSS). Residues 79–102 (SVTPNMLVNFLTEKNTISYLGCGI) are Extracellular-facing. An intrachain disulfide couples C100 to C192. A helical transmembrane segment spans residues 103-123 (QLSSAAFFGAVEFFLLAAMAY). Over 124–136 (DRLVAICNPLLYS) the chain is Cytoplasmic. Residues 137 to 157 (TKMSSQVCIQLVAGSYVGGFL) traverse the membrane as a helical segment. The Extracellular portion of the chain corresponds to 158–199 (NASFVTHFFFSFLFCGPNRVNHFFCDLSPMMELSCSDVSISE). The chain crosses the membrane as a helical span at residues 200–220 (IVISFSAGSFTMTTLFVIVIP). Residues 221-240 (YFYIFITILKIRSTEGRQKA) are Cytoplasmic-facing. The helical transmembrane segment at 241–261 (FSTCTSHLTAVTLYYGTIIFI) threads the bilayer. Residues 262–274 (YVMPKSTYSRDQN) are Extracellular-facing. The chain crosses the membrane as a helical span at residues 275–295 (KVVSLFYMLVIPVLNPLIYSL). At 296–314 (RNNEIKDALKRQFYRKTLL) the chain is on the cytoplasmic side.

It belongs to the G-protein coupled receptor 1 family.

It is found in the cell membrane. Its function is as follows. Potential odorant receptor. In Mus musculus (Mouse), this protein is Olfactory receptor 5P62.